The following is an 842-amino-acid chain: Protein translocase subunit SecA (842 aa).

ATP is bound by residues Gln-91, Gly-109 to Thr-113, and Asp-498. The span at Gln-798–Arg-824 shows a compositional bias: basic and acidic residues. The interval Gln-798–Pro-827 is disordered. Zn(2+) contacts are provided by Cys-828, Cys-830, Cys-839, and Cys-840.

Belongs to the SecA family. Monomer and homodimer. Part of the essential Sec protein translocation apparatus which comprises SecA, SecYEG and auxiliary proteins SecDF. Other proteins may also be involved. It depends on Zn(2+) as a cofactor.

The protein resides in the cell membrane. Its subcellular location is the cytoplasm. It catalyses the reaction ATP + H2O + cellular proteinSide 1 = ADP + phosphate + cellular proteinSide 2.. Part of the Sec protein translocase complex. Interacts with the SecYEG preprotein conducting channel. Has a central role in coupling the hydrolysis of ATP to the transfer of proteins into and across the cell membrane, serving as an ATP-driven molecular motor driving the stepwise translocation of polypeptide chains across the membrane. The chain is Protein translocase subunit SecA from Staphylococcus carnosus (strain TM300).